The sequence spans 223 residues: Cytotoxic T-lymphocyte protein 4 (223 aa).

An N-terminal signal peptide occupies residues 1–35 (MACLGFQRHKAQLNLATRTWPCTLLFFLLFIPVFC). Over 36-161 (KAMHVAQPAV…IDPEPCPDSD (126 aa)) the chain is Extracellular. An Ig-like V-type domain is found at 39 to 140 (HVAQPAVVLA…VELMYPPPYY (102 aa)). A homodimerization region spans residues 46 to 50 (VLASS). Intrachain disulfides connect C58-C129 and C85-C103. N-linked (GlcNAc...) asparagine glycosylation occurs at N113. The segment at 134–139 (MYPPPY) is important for interaction with CD80 and CD86. An N-linked (GlcNAc...) asparagine glycan is attached at N145. Residues 150 to 155 (YVIDPE) form a homodimerization region. Residues 162–182 (FLLWILAAVSSGLFFYSFLLT) form a helical membrane-spanning segment. Residues 183–223 (AVSLSKMLKKRSPLTTGVYVKMPPTEPECEKQFQPYFIPIN) are Cytoplasmic-facing. A Phosphotyrosine; by TXK and JAK2 modification is found at Y201.

As to quaternary structure, homodimer; disulfide-linked. Binds to CD80/B7-1 and CD86/B7.2. Interacts with ICOSLG. In terms of processing, N-glycosylation is important for dimerization. Phosphorylation at Tyr-201 prevents binding to the AP-2 adapter complex, blocks endocytosis, and leads to retention of CTLA4 on the cell surface. As to expression, widely expressed with highest levels in lymphoid tissues. Detected in activated T-cells where expression levels are 30- to 50-fold less than CD28, the stimulatory coreceptor, on the cell surface following activation.

It localises to the cell membrane. Inhibitory receptor acting as a major negative regulator of T-cell responses. The affinity of CTLA4 for its natural B7 family ligands, CD80 and CD86, is considerably stronger than the affinity of their cognate stimulatory coreceptor CD28. This is Cytotoxic T-lymphocyte protein 4 (CTLA4) from Homo sapiens (Human).